A 284-amino-acid polypeptide reads, in one-letter code: 2-dehydro-3-deoxyphosphooctonate aldolase (284 aa).

It belongs to the KdsA family.

It localises to the cytoplasm. It catalyses the reaction D-arabinose 5-phosphate + phosphoenolpyruvate + H2O = 3-deoxy-alpha-D-manno-2-octulosonate-8-phosphate + phosphate. Its pathway is carbohydrate biosynthesis; 3-deoxy-D-manno-octulosonate biosynthesis; 3-deoxy-D-manno-octulosonate from D-ribulose 5-phosphate: step 2/3. It functions in the pathway bacterial outer membrane biogenesis; lipopolysaccharide biosynthesis. This Escherichia coli O6:H1 (strain CFT073 / ATCC 700928 / UPEC) protein is 2-dehydro-3-deoxyphosphooctonate aldolase.